The primary structure comprises 1227 residues: Beta-alanyl-bioamine nonribosomal peptide synthetase (1227 aa).

Positions Met1–Leu850 are adenylation. Residues Ser851–Glu931 enclose the Carrier domain. Ser892 carries the O-(pantetheine 4'-phosphoryl)serine modification. A condensation region spans residues Ser932–Ser1227.

This sequence belongs to the NRP synthetase family. It depends on pantetheine 4'-phosphate as a cofactor. As to expression, in virgin and paired males, bilaterally expressed in some cells in the head. During pairing, expressed throughout the ventral side of the body probably in ciliated neurons. Highly expressed in virgin females in cells throughout the body and only weakly expressed in sexually mature females. In virgin females, expressed in some cells in the head and on the dorsal surface and lateral edges of body.

The enzyme catalyses tryptamine + beta-alanine + ATP = beta-alanyl-tryptamine + AMP + diphosphate + H(+). It carries out the reaction beta-alanine + ATP + H(+) = beta-alanyl-5'-AMP + diphosphate. The catalysed reaction is beta-alanyl-5'-AMP + holo-[peptidyl-carrier protein] = beta-alanyl-[peptidyl-carrier protein] + AMP + H(+). It catalyses the reaction beta-alanyl-[peptidyl-carrier protein] + tryptamine = beta-alanyl-tryptamine + holo-[peptidyl-carrier protein] + H(+). Functionally, catalyzes the condensation of beta-alanine with tryptamine to form beta-alanyl-tryptamine (BATT). Beta-alanyl-tryptamine is an essential pheromone produced by the male that stimulates female sexual development during pairing. In Schistosoma mansoni (Blood fluke), this protein is Beta-alanyl-bioamine nonribosomal peptide synthetase.